Reading from the N-terminus, the 280-residue chain is Nucleotide-binding protein CV_3336 (280 aa).

8 to 15 (GLSGSGKS) lines the ATP pocket. 57 to 60 (DTRS) provides a ligand contact to GTP.

It belongs to the RapZ-like family.

In terms of biological role, displays ATPase and GTPase activities. The polypeptide is Nucleotide-binding protein CV_3336 (Chromobacterium violaceum (strain ATCC 12472 / DSM 30191 / JCM 1249 / CCUG 213 / NBRC 12614 / NCIMB 9131 / NCTC 9757 / MK)).